The chain runs to 770 residues: Multifunctional tryptophan biosynthesis protein (770 aa).

Residues 25-225 enclose the Glutamine amidotransferase type-1 domain; that stretch reads NVILIDNYDS…LKLTAGTWEG (201 aa). Residue 76–78 coordinates L-glutamine; it reads GPG. Cys104 functions as the Nucleophile; for GATase activity in the catalytic mechanism. L-glutamine is bound by residues Gln108 and 154-155; that span reads SL. Catalysis depends on for GATase activity residues His199 and Glu201. The interval 228-251 is disordered; it reads KHFGEQSSTTKATVPSNPPPKTDK. Residues 232-242 are compositionally biased toward polar residues; that stretch reads EQSSTTKATVP. The indole-3-glycerol phosphate synthase stretch occupies residues 255–519; that stretch reads ILERIYDHRR…DTATFIAELL (265 aa). An N-(5'-phosphoribosyl)anthranilate isomerase region spans residues 535 to 770; the sequence is LVKICGTRSE…RAFVQAVRGL (236 aa).

The enzyme catalyses N-(5-phospho-beta-D-ribosyl)anthranilate = 1-(2-carboxyphenylamino)-1-deoxy-D-ribulose 5-phosphate. It catalyses the reaction 1-(2-carboxyphenylamino)-1-deoxy-D-ribulose 5-phosphate + H(+) = (1S,2R)-1-C-(indol-3-yl)glycerol 3-phosphate + CO2 + H2O. The catalysed reaction is chorismate + L-glutamine = anthranilate + pyruvate + L-glutamate + H(+). The protein operates within amino-acid biosynthesis; L-tryptophan biosynthesis; L-tryptophan from chorismate: step 1/5. Its pathway is amino-acid biosynthesis; L-tryptophan biosynthesis; L-tryptophan from chorismate: step 3/5. It functions in the pathway amino-acid biosynthesis; L-tryptophan biosynthesis; L-tryptophan from chorismate: step 4/5. Functionally, trifunctional enzyme bearing the Gln amidotransferase (GATase) domain of anthranilate synthase, indole-glycerolphosphate synthase, and phosphoribosylanthranilate isomerase activities. In Aspergillus niger, this protein is Multifunctional tryptophan biosynthesis protein (trpC).